Here is a 290-residue protein sequence, read N- to C-terminus: Putative transport permease ycf38 (290 aa).

7 helical membrane-spanning segments follow: residues 21 to 41 (VTSF…FIQL), 46 to 66 (ITLI…GALF), 86 to 106 (PGIL…PLIF), 133 to 153 (FFIS…GVFL), 167 to 187 (FFFL…LALL), 194 to 213 (LIAV…TALA), and 261 to 281 (INIG…FLLF). Residues 46–284 (ITLISGILQP…LVGFLLFKKI (239 aa)) enclose the ABC transmembrane type-2 domain.

Belongs to the ABC-2 integral membrane protein family.

Its subcellular location is the plastid. It is found in the cyanelle membrane. This is Putative transport permease ycf38 (ycf38) from Cyanophora paradoxa.